Consider the following 125-residue polypeptide: Plastocyanin (125 aa).

Residues 1 to 34 form the signal peptide; that stretch reads MKVLASFARRLSLFAVAAVLCVGSFFLSAAPASA. Residues 35–125 form the Plastocyanin-like domain; it reads QTVAIKMGAD…AGMVGKIVVQ (91 aa). 4 residues coordinate Cu cation: histidine 73, cysteine 110, histidine 113, and methionine 118.

It belongs to the plastocyanin family. Cu(2+) is required as a cofactor.

It localises to the cellular thylakoid membrane. Functionally, participates in electron transfer between P700 and the cytochrome b6-f complex in photosystem I. This chain is Plastocyanin (petE), found in Synechococcus elongatus (strain ATCC 33912 / PCC 7942 / FACHB-805) (Anacystis nidulans R2).